Reading from the N-terminus, the 141-residue chain is Hemoglobin subunit alpha (141 aa).

One can recognise a Globin domain in the interval 1-141; sequence VLSPADKTNV…VSTVLTSKYR (141 aa). The residue at position 3 (serine 3) is a Phosphoserine. Lysine 7 carries the N6-succinyllysine modification. Threonine 8 carries the post-translational modification Phosphothreonine. N6-succinyllysine is present on lysine 11. Position 16 is an N6-acetyllysine; alternate (lysine 16). Residue lysine 16 is modified to N6-succinyllysine; alternate. Tyrosine 24 is modified (phosphotyrosine). Serine 35 carries the phosphoserine modification. Position 40 is an N6-succinyllysine (lysine 40). A Phosphoserine modification is found at serine 49. Histidine 58 is a binding site for O2. Histidine 87 is a heme b binding site. Serine 102 is subject to Phosphoserine. Threonine 108 is subject to Phosphothreonine. A phosphoserine mark is found at serine 124 and serine 131. Threonine 134 and threonine 137 each carry phosphothreonine. Phosphoserine is present on serine 138.

This sequence belongs to the globin family. Heterotetramer of two alpha chains and two beta chains. Red blood cells.

Its function is as follows. Involved in oxygen transport from the lung to the various peripheral tissues. Functionally, hemopressin acts as an antagonist peptide of the cannabinoid receptor CNR1. Hemopressin-binding efficiently blocks cannabinoid receptor CNR1 and subsequent signaling. This chain is Hemoglobin subunit alpha (HBA), found in Urocitellus parryii (Arctic ground squirrel).